A 587-amino-acid chain; its full sequence is Serine/threonine-protein phosphatase 2A 65 kDa regulatory subunit A gamma isoform (587 aa).

An N-acetylserine modification is found at S2. HEAT repeat units follow at residues 2 to 42, 44 to 80, 81 to 119, 158 to 194, 197 to 235, 236 to 274, 276 to 313, 314 to 352, 353 to 391, 393 to 430, 432 to 469, 470 to 508, 509 to 547, and 549 to 586; these read SMVD…ALGE, RTRK…YVGG, VEYA…QMRE, DVLK…AATI, AHLK…LLEP, QDCV…AVGP, PTRT…ILNP, ELAI…VLGK, DATI…VIGI, LLSQ…QLGV, FFDE…EFGP, EWAM…VMGS, EITC…IVDQ, and VVEN…VMMS.

The protein belongs to the phosphatase 2A regulatory subunit A family. As to quaternary structure, PP2A consists of a common heterodimeric core enzyme, composed of a 36 kDa catalytic subunit (subunit C) and a 65 kDa constant regulatory subunit (subunit A), that associates with a variety of regulatory subunits such as subunits B (the R2/B/PR55/B55, R3/B''/PR72/PR130/PR59 and R5/B'/B56 families). Interacts with CHIP. Interacts with SRK2E/OST1. Ubiquitinated. CHIP-mediated ubiquitination enhances phosphatase activity after an abiotic stress such as low temperature or darkness. In terms of tissue distribution, expressed ubiquitously at stable levels. However, higher protein levels in roots and flowers (at protein level).

Its subcellular location is the cytoplasm. It is found in the cytosol. The protein localises to the nucleus. The A subunit of protein phosphatase 2A serves as a scaffolding molecule to coordinate the assembly of the catalytic subunit and a variable regulatory B subunit. Involved during developmental process such as seedling and floral developments. Seems to act as a negative regulator of PP2A catalytic activity. The sequence is that of Serine/threonine-protein phosphatase 2A 65 kDa regulatory subunit A gamma isoform (PP2AA3) from Arabidopsis thaliana (Mouse-ear cress).